The following is a 1460-amino-acid chain: DNA-binding protein RFX7 (1460 aa).

Residues 1 to 34 (MAEEQQQPPPQQPDAHQQLPPSAPNSGVALPALV) are disordered. A DNA-binding region (RFX-type winged-helix) is located at residues 108-183 (AFSWIRNTLE…YCYSGLRKKA (76 aa)). A PxLPxI/L motif; mediates interaction with ANKRA2 and RFXANK motif is present at residues 188–193 (PTLPNL). Positions 308-352 (QRKIQKKQQEQKLQSPLPGESAAKKSESATSNGVTNLPNGNPSIL) are disordered. The residue at position 322 (Ser322) is a Phosphoserine. Residues 337–352 (TSNGVTNLPNGNPSIL) are compositionally biased toward polar residues. At Ser379 the chain carries Phosphoserine. Over residues 404 to 416 (SVKQAPKTPQNVP) the composition is skewed to polar residues. The tract at residues 404-428 (SVKQAPKTPQNVPASPGGDRSARHR) is disordered. Phosphoserine is present on residues Ser418 and Ser455. A compositionally biased stretch (polar residues) spans 481-513 (TPSNSNTPLKHSASVSSATGTTEESRSVPQIKN). Disordered regions lie at residues 481–585 (TPSN…PSNE), 632–715 (TFTS…AQIP), and 917–1015 (QSVT…SVPP). Residues 515-535 (SVVSLQSPGSRSSSAGGTSAV) show a composition bias toward low complexity. Residues 537-549 (VKVEPETSSDEHP) show a composition bias toward basic and acidic residues. Composition is skewed to polar residues over residues 563 to 583 (QTPS…QKPS) and 632 to 644 (TFTS…NGDS). The residue at position 564 (Thr564) is a Phosphothreonine. Ser662 is modified (phosphoserine). Lys704 carries the post-translational modification N6-acetyllysine. 2 stretches are compositionally biased toward polar residues: residues 705–715 (TEGSTAGAQIP) and 917–933 (QSVT…SSTH). A compositionally biased stretch (pro residues) spans 947-963 (TPTPTPTPTPTPTPTPT). A compositionally biased stretch (polar residues) spans 971-1009 (GSQSLSRESPCSRLAQTTPVDSALGSSRHTPIGTPHSNC). A Phosphothreonine modification is found at Thr988. Phosphoserine occurs at positions 1178 and 1329.

It belongs to the RFX family. As to quaternary structure, interacts (via PxLPxI/L motif) with RFXANK (via ankyrin repeats). Interacts (via PxLPxI/L motif) with ANKRA2 (via ankyrin repeats). In terms of tissue distribution, widely expressed in many different tissue types including thymus and placenta, with high expression in brain. Expressed in both inhibitory and excitatory neurons in cortex.

It localises to the nucleus. Its function is as follows. Transcription factor. Acts as a transcriptional activator by binding to promoter regions of target genes, such as PDCD4, PIK3IP1, MXD4, PNRC1, and RFX5. Plays a role in natural killer (NK) cell maintenance and immunity. May play a role in the process of ciliogenesis in the neural tube and neural tube closure. This chain is DNA-binding protein RFX7, found in Homo sapiens (Human).